We begin with the raw amino-acid sequence, 258 residues long: UPF0246 protein YaaA (258 aa).

Belongs to the UPF0246 family.

This is UPF0246 protein YaaA from Escherichia coli (strain UTI89 / UPEC).